The following is a 467-amino-acid chain: MKHKVKRIHFVGIGGAGMSGIAEVLVNLGYSVSGSDLGDSAATRRLKAMGAKVVLGHDAANVEAADALVVSTAVKNDNPEVIAARARHIPIVPRAQMLAELMRLKSGIAIAGTHGKTTTTSLVASILAEGAMDPTFVIGGRLNAAGANARLGKGDFLVAEADESDASFLMLSPVISVVTNIDADHMDTYGHDFARLKQAFVDFLQRLPFYGVAVLCEDDPHVRSIMPLVSKQVVRYGLSETANIRAENIRAEGGRMIFDVLRVNGSTTRLADVVLNLPGLHNVRNALAAIAVATEVQVPDEAIVKALAEFSGVGRRFQRYGEVAAPSGGTFTLIDDYGHHPVEMEATLAAARGAFPGRRLVLAFQPHRYTRTRDCFEDFVKVLSTVDALLLAEVYAAGEAPIVAADGRALSRALRVAGKVEPVFVEDIGGMPQAVLEAVRDGDVVITMGAGSIGAVPGKLASNEEQA.

ATP is bound at residue 112–118 (GTHGKTT).

It belongs to the MurCDEF family.

Its subcellular location is the cytoplasm. The catalysed reaction is UDP-N-acetyl-alpha-D-muramate + L-alanine + ATP = UDP-N-acetyl-alpha-D-muramoyl-L-alanine + ADP + phosphate + H(+). It functions in the pathway cell wall biogenesis; peptidoglycan biosynthesis. Its function is as follows. Cell wall formation. In Azoarcus sp. (strain BH72), this protein is UDP-N-acetylmuramate--L-alanine ligase.